A 551-amino-acid chain; its full sequence is Chaperonin GroEL (551 aa).

ATP-binding positions include 30-33, K51, 87-91, G415, 481-483, and D497; these read TLGP, DGTTT, and NAA.

Belongs to the chaperonin (HSP60) family. In terms of assembly, forms a cylinder of 14 subunits composed of two heptameric rings stacked back-to-back. Interacts with the co-chaperonin GroES.

The protein resides in the cytoplasm. It carries out the reaction ATP + H2O + a folded polypeptide = ADP + phosphate + an unfolded polypeptide.. Its function is as follows. Together with its co-chaperonin GroES, plays an essential role in assisting protein folding. The GroEL-GroES system forms a nano-cage that allows encapsulation of the non-native substrate proteins and provides a physical environment optimized to promote and accelerate protein folding. This Magnetococcus marinus (strain ATCC BAA-1437 / JCM 17883 / MC-1) protein is Chaperonin GroEL.